Reading from the N-terminus, the 629-residue chain is Embryonic polyadenylate-binding protein A (629 aa).

4 consecutive RRM domains span residues 11–89, 99–175, 191–268, and 294–370; these read ASLY…WSQR, GNVF…HFKS, TNVY…RAQK, and VNLY…LAQR. The PABC domain occupies 539 to 616; it reads QEPLTASLLA…AVAVLQAHQA (78 aa).

This sequence belongs to the polyadenylate-binding protein type-1 family. As to quaternary structure, interacts with dazl in an RNA-independent manner. The C-terminus can self-associate and also interact with the C-terminus of pabpc1, independently of RNA. RRM 1 and RRM 2 interact with both eif4g1 and paip1, and the C-terminus also interacts with paip1. Prior to oocyte maturation, found in a complex with dazl and pum2 proteins and spdy1 mRNA; pum2 dissociates from the complex during maturation. Interacts with the translation termination factor sup35/erf3. Expressed in adult testis, but at a reduced level compared to oocytes.

It is found in the cytoplasm. Binds and protects the poly(A) tail of mRNA with or without an AU-rich element (ARE) and prevents mRNA deadenylation. Stimulates the translation of mRNAs to which it is bound during early development. The protein is Embryonic polyadenylate-binding protein A (epabp-a) of Xenopus laevis (African clawed frog).